The chain runs to 336 residues: Protein DIA1 (336 aa).

It is found in the cytoplasm. In terms of biological role, involved in regulation of invasive growth. This chain is Protein DIA1 (DIA1), found in Saccharomyces cerevisiae (strain ATCC 204508 / S288c) (Baker's yeast).